Consider the following 217-residue polypeptide: Phosphatidylserine decarboxylase proenzyme (217 aa).

S182 serves as the catalytic Schiff-base intermediate with substrate; via pyruvic acid. S182 carries the pyruvic acid (Ser); by autocatalysis modification.

Belongs to the phosphatidylserine decarboxylase family. PSD-A subfamily. In terms of assembly, heterodimer of a large membrane-associated beta subunit and a small pyruvoyl-containing alpha subunit. Pyruvate is required as a cofactor. Post-translationally, is synthesized initially as an inactive proenzyme. Formation of the active enzyme involves a self-maturation process in which the active site pyruvoyl group is generated from an internal serine residue via an autocatalytic post-translational modification. Two non-identical subunits are generated from the proenzyme in this reaction, and the pyruvate is formed at the N-terminus of the alpha chain, which is derived from the carboxyl end of the proenzyme. The post-translation cleavage follows an unusual pathway, termed non-hydrolytic serinolysis, in which the side chain hydroxyl group of the serine supplies its oxygen atom to form the C-terminus of the beta chain, while the remainder of the serine residue undergoes an oxidative deamination to produce ammonia and the pyruvoyl prosthetic group on the alpha chain.

It localises to the cell membrane. The catalysed reaction is a 1,2-diacyl-sn-glycero-3-phospho-L-serine + H(+) = a 1,2-diacyl-sn-glycero-3-phosphoethanolamine + CO2. Its pathway is phospholipid metabolism; phosphatidylethanolamine biosynthesis; phosphatidylethanolamine from CDP-diacylglycerol: step 2/2. In terms of biological role, catalyzes the formation of phosphatidylethanolamine (PtdEtn) from phosphatidylserine (PtdSer). This chain is Phosphatidylserine decarboxylase proenzyme, found in Nitratidesulfovibrio vulgaris (strain ATCC 29579 / DSM 644 / CCUG 34227 / NCIMB 8303 / VKM B-1760 / Hildenborough) (Desulfovibrio vulgaris).